A 140-amino-acid chain; its full sequence is Chromatin accessibility complex 16kD protein (140 aa).

The interval 111–140 is disordered; it reads LNRSAGSDDDDDDDDDDDEEESESESESDE. Acidic residues predominate over residues 117 to 140; the sequence is SDDDDDDDDDDDEEESESESESDE.

Component of the chromatin accessibility complex (CHRAC), composed of Chrac-14, Chrac-16, Acf and Iswi. Forms a heterodimer with Chrac-14. The Chrac-14/Chrac-16 heterodimer interacts with Acf (via N-terminus). Stabilizes the interaction between Chrac-14 and Iswi.

Its subcellular location is the nucleus. Its function is as follows. Histone-like protein which promotes nucleosome sliding of ATP-dependent nucleosome remodeling complexes. Part of the chromatin-accessibility complex (CHRAC) which uses energy/ATP to increase the general accessibility of DNA in chromatin. As a heterodimer with Chrac-14, binds DNA and facilitates nucleosome sliding by Acf. As part of the CHRAC complex, required for oogenesis. The chain is Chromatin accessibility complex 16kD protein from Drosophila melanogaster (Fruit fly).